The primary structure comprises 341 residues: tRNA N6-adenosine threonylcarbamoyltransferase (341 aa).

Residues His111 and His115 each contribute to the Fe cation site. Substrate-binding positions include 134-138, Asp167, Gly180, and Asn276; that span reads LVSGG. A Fe cation-binding site is contributed by Asp304.

This sequence belongs to the KAE1 / TsaD family. Fe(2+) is required as a cofactor.

It is found in the cytoplasm. The catalysed reaction is L-threonylcarbamoyladenylate + adenosine(37) in tRNA = N(6)-L-threonylcarbamoyladenosine(37) in tRNA + AMP + H(+). Required for the formation of a threonylcarbamoyl group on adenosine at position 37 (t(6)A37) in tRNAs that read codons beginning with adenine. Is involved in the transfer of the threonylcarbamoyl moiety of threonylcarbamoyl-AMP (TC-AMP) to the N6 group of A37, together with TsaE and TsaB. TsaD likely plays a direct catalytic role in this reaction. This chain is tRNA N6-adenosine threonylcarbamoyltransferase, found in Pseudomonas syringae pv. tomato (strain ATCC BAA-871 / DC3000).